Here is a 1014-residue protein sequence, read N- to C-terminus: Calcium-transporting ATPase 2, plasma membrane-type (1014 aa).

Met-1 is modified (N-acetylmethionine). Topologically, residues 1 to 160 (MESYLNENFD…NKFAESEMRG (160 aa)) are cytoplasmic. An interaction with calmodulin region spans residues 20–31 (VLEKWRNLCGVV). Position 45 is a phosphoserine; by CPK1 (Ser-45). The chain crosses the membrane as a helical span at residues 161–181 (FWVFVWEALQDMTLMILGVCA). Topologically, residues 182–199 (FVSLIVGIATEGWPKGSH) are lumenal. Residues 200 to 220 (DGLGIAASILLVVFVTATSDY) form a helical membrane-spanning segment. Residues 221-348 (RQSLQFRDLD…DDETPLQVKL (128 aa)) lie on the Cytoplasmic side of the membrane. The chain crosses the membrane as a helical span at residues 349–368 (NGVATIIGKIGLFFAVVTFA). Over 369 to 398 (VLVQGMFMRKLSTGTHWVWSGDEALELLEY) the chain is Lumenal. A helical transmembrane segment spans residues 399–416 (FAIAVTIVVVAVPEGLPL). Residues 417–810 (AVTLSLAFAM…KWGRSVYINI (394 aa)) lie on the Cytoplasmic side of the membrane. The active-site 4-aspartylphosphate intermediate is Asp-454. Mg(2+)-binding residues include Asp-755 and Asp-759. A helical transmembrane segment spans residues 811 to 829 (QKFVQFQLTVNVVALVVNF). Residues 830–840 (SSACLTGSAPL) are Lumenal-facing. A helical transmembrane segment spans residues 841–861 (TAVQLLWVNMIMDTLGALALA). Over 862 to 881 (TEPPNDELMKRLPVGRRGNF) the chain is Cytoplasmic. The helical transmembrane segment at 882–904 (ITNAMWRNILGQAVYQFIVIWIL) threads the bilayer. At 905 to 916 (QAKGKAMFGLDG) the chain is on the lumenal side. A helical transmembrane segment spans residues 917-938 (PDSTLMLNTLIFNCFVFCQVFN). Over 939 to 956 (EISSREMEEIDVFKGILD) the chain is Cytoplasmic. A helical membrane pass occupies residues 957-978 (NYVFVVVIGATVFFQIIIIEFL). At 979 to 988 (GTFASTTPLT) the chain is on the lumenal side. Residues 989–1010 (ITQWIFSIFIGFLGMPIAAGLK) form a helical membrane-spanning segment. Topologically, residues 1011 to 1014 (TIPV) are cytoplasmic.

It belongs to the cation transport ATPase (P-type) (TC 3.A.3) family. Type IIB subfamily.

It is found in the endoplasmic reticulum membrane. The catalysed reaction is Ca(2+)(in) + ATP + H2O = Ca(2+)(out) + ADP + phosphate + H(+). With respect to regulation, activated by calmodulin. In terms of biological role, this magnesium-dependent enzyme catalyzes the hydrolysis of ATP coupled with the translocation of calcium from the cytosol into the endoplasmic reticulum. The sequence is that of Calcium-transporting ATPase 2, plasma membrane-type (ACA2) from Arabidopsis thaliana (Mouse-ear cress).